Reading from the N-terminus, the 89-residue chain is DNA/RNA-binding protein Alba (89 aa).

An N6-acetyllysine modification is found at Lys-11.

Belongs to the histone-like Alba family. Post-translationally, acetylated. Acetylation at Lys-11 decreases DNA-binding affinity.

It is found in the cytoplasm. It localises to the chromosome. In terms of biological role, binds double-stranded DNA tightly but without sequence specificity. Involved in DNA compaction. This is DNA/RNA-binding protein Alba from Thermoplasma volcanium (strain ATCC 51530 / DSM 4299 / JCM 9571 / NBRC 15438 / GSS1).